The following is a 415-amino-acid chain: Serine hydroxymethyltransferase (415 aa).

(6S)-5,6,7,8-tetrahydrofolate-binding positions include L117 and 121–123 (GHL). K226 bears the N6-(pyridoxal phosphate)lysine mark. Residues E241 and 349–351 (SPF) each bind (6S)-5,6,7,8-tetrahydrofolate.

Belongs to the SHMT family. Homodimer. It depends on pyridoxal 5'-phosphate as a cofactor.

Its subcellular location is the cytoplasm. It catalyses the reaction (6R)-5,10-methylene-5,6,7,8-tetrahydrofolate + glycine + H2O = (6S)-5,6,7,8-tetrahydrofolate + L-serine. It participates in one-carbon metabolism; tetrahydrofolate interconversion. It functions in the pathway amino-acid biosynthesis; glycine biosynthesis; glycine from L-serine: step 1/1. Catalyzes the reversible interconversion of serine and glycine with tetrahydrofolate (THF) serving as the one-carbon carrier. This reaction serves as the major source of one-carbon groups required for the biosynthesis of purines, thymidylate, methionine, and other important biomolecules. Also exhibits THF-independent aldolase activity toward beta-hydroxyamino acids, producing glycine and aldehydes, via a retro-aldol mechanism. In Geobacter metallireducens (strain ATCC 53774 / DSM 7210 / GS-15), this protein is Serine hydroxymethyltransferase.